Reading from the N-terminus, the 617-residue chain is uncharacterized protein (617 aa).

A helical transmembrane segment spans residues 10 to 30; it reads AFFFFFVSLILLFLSPSYSDV. The segment at 34 to 58 is disordered; the sequence is ESDPIPYENSDASPGVVTSSESDRQ. Over residues 43–53 the composition is skewed to polar residues; that stretch reads SDASPGVVTSS. Residues 60–86 are a coiled coil; that stretch reads VSLHRLEELVRNLTELVARLDAKLSET. Residues 473 to 493 traverse the membrane as a helical segment; the sequence is MLWSSPVFFFILFLFGAWHFF. Residues 511–529 show a composition bias toward low complexity; that stretch reads STTMSSSSTTTAQNSSAFS. The segment at 511 to 617 is disordered; the sequence is STTMSSSSTT…GNNKALDDES (107 aa). Over residues 531-543 the composition is skewed to basic and acidic residues; it reads STRRNDDHMDLRR. Residues 563–584 show a composition bias toward polar residues; sequence VGSNDPSSRAPVETTNYRTTAQ. The segment covering 590–599 has biased composition (gly residues); the sequence is GGSGLDSGGF.

The protein localises to the membrane. This is an uncharacterized protein from Arabidopsis thaliana (Mouse-ear cress).